The chain runs to 550 residues: Glucose-6-phosphate isomerase (550 aa).

Residue glutamate 356 is the Proton donor of the active site. Residues histidine 387 and lysine 515 contribute to the active site.

Belongs to the GPI family.

Its subcellular location is the cytoplasm. It carries out the reaction alpha-D-glucose 6-phosphate = beta-D-fructose 6-phosphate. Its pathway is carbohydrate biosynthesis; gluconeogenesis. The protein operates within carbohydrate degradation; glycolysis; D-glyceraldehyde 3-phosphate and glycerone phosphate from D-glucose: step 2/4. Catalyzes the reversible isomerization of glucose-6-phosphate to fructose-6-phosphate. This Aliivibrio fischeri (strain MJ11) (Vibrio fischeri) protein is Glucose-6-phosphate isomerase.